The sequence spans 150 residues: Globin-2 A chain (150 aa).

Position 2 is a blocked amino end (Val) (Val2). A Globin domain is found at 10–150; that stretch reads CGSEAIKANL…ALVGVVQAAL (141 aa). Residue His102 coordinates heme b.

The protein belongs to the globin family. Heterotetramer of two alpha chains and two beta chains.

The sequence is that of Globin-2 A chain from Anadara inaequivalvis (Inequivalve ark).